Here is a 367-residue protein sequence, read N- to C-terminus: 2-aminoethylphosphonate--pyruvate transaminase (367 aa).

Lysine 194 is subject to N6-(pyridoxal phosphate)lysine.

This sequence belongs to the class-V pyridoxal-phosphate-dependent aminotransferase family. PhnW subfamily. Homodimer. It depends on pyridoxal 5'-phosphate as a cofactor.

It catalyses the reaction (2-aminoethyl)phosphonate + pyruvate = phosphonoacetaldehyde + L-alanine. Its function is as follows. Involved in phosphonate degradation. The chain is 2-aminoethylphosphonate--pyruvate transaminase from Salmonella choleraesuis (strain SC-B67).